The chain runs to 227 residues: Probable septum site-determining protein MinC (227 aa).

The protein belongs to the MinC family. Interacts with MinD and FtsZ.

Its function is as follows. Cell division inhibitor that blocks the formation of polar Z ring septums. Rapidly oscillates between the poles of the cell to destabilize FtsZ filaments that have formed before they mature into polar Z rings. Prevents FtsZ polymerization. The sequence is that of Probable septum site-determining protein MinC from Bacillus pumilus (strain SAFR-032).